The primary structure comprises 407 residues: Tyrosine--tRNA ligase (407 aa).

Tyrosine 35 lines the L-tyrosine pocket. Positions 40–49 (PTADSLHVGH) match the 'HIGH' region motif. L-tyrosine contacts are provided by tyrosine 168 and glutamine 172. Residues 228–232 (KMGKT) carry the 'KMSKS' region motif. Lysine 231 is a binding site for ATP. One can recognise an S4 RNA-binding domain in the interval 341–405 (NPLVDLLAKC…RGKKNFNRIV (65 aa)).

Belongs to the class-I aminoacyl-tRNA synthetase family. TyrS type 1 subfamily. As to quaternary structure, homodimer.

The protein localises to the cytoplasm. It carries out the reaction tRNA(Tyr) + L-tyrosine + ATP = L-tyrosyl-tRNA(Tyr) + AMP + diphosphate + H(+). Functionally, catalyzes the attachment of tyrosine to tRNA(Tyr) in a two-step reaction: tyrosine is first activated by ATP to form Tyr-AMP and then transferred to the acceptor end of tRNA(Tyr). The chain is Tyrosine--tRNA ligase from Clostridium botulinum (strain 657 / Type Ba4).